A 158-amino-acid polypeptide reads, in one-letter code: MNVVQGNIEAKNAKVAIVISRFNSFLVESLLDGAIDTLKRFGQVSDDNITVVRVPGAVELPLAAKRVAASGKFDGIIALGAVIRGGTPHFEFVAGECNKGLAQVALEYDLPVSFGVLTTDTIEQAIERSGTKAGNKGGEAALSLLEMVNVLQQLEQQL.

Residues Phe-22, 57 to 59 (AVE), and 81 to 83 (AVI) contribute to the 5-amino-6-(D-ribitylamino)uracil site. 86 to 87 (GT) lines the (2S)-2-hydroxy-3-oxobutyl phosphate pocket. Catalysis depends on His-89, which acts as the Proton donor. Phe-114 provides a ligand contact to 5-amino-6-(D-ribitylamino)uracil. Arg-128 is a binding site for (2S)-2-hydroxy-3-oxobutyl phosphate.

Belongs to the DMRL synthase family. Forms an icosahedral capsid composed of 60 subunits, arranged as a dodecamer of pentamers.

The enzyme catalyses (2S)-2-hydroxy-3-oxobutyl phosphate + 5-amino-6-(D-ribitylamino)uracil = 6,7-dimethyl-8-(1-D-ribityl)lumazine + phosphate + 2 H2O + H(+). Its pathway is cofactor biosynthesis; riboflavin biosynthesis; riboflavin from 2-hydroxy-3-oxobutyl phosphate and 5-amino-6-(D-ribitylamino)uracil: step 1/2. Its function is as follows. Catalyzes the formation of 6,7-dimethyl-8-ribityllumazine by condensation of 5-amino-6-(D-ribitylamino)uracil with 3,4-dihydroxy-2-butanone 4-phosphate. This is the penultimate step in the biosynthesis of riboflavin. The chain is 6,7-dimethyl-8-ribityllumazine synthase from Shewanella frigidimarina (strain NCIMB 400).